The following is a 407-amino-acid chain: Multifunctional CCA protein (407 aa).

ATP contacts are provided by G8 and R11. CTP contacts are provided by G8 and R11. Mg(2+)-binding residues include D21 and D23. Positions 91, 137, and 140 each coordinate ATP. Positions 91, 137, and 140 each coordinate CTP. In terms of domain architecture, HD spans T228–W329.

Belongs to the tRNA nucleotidyltransferase/poly(A) polymerase family. Bacterial CCA-adding enzyme type 1 subfamily. In terms of assembly, monomer. Can also form homodimers and oligomers. Mg(2+) serves as cofactor. Ni(2+) is required as a cofactor.

It catalyses the reaction a tRNA precursor + 2 CTP + ATP = a tRNA with a 3' CCA end + 3 diphosphate. It carries out the reaction a tRNA with a 3' CCA end + 2 CTP + ATP = a tRNA with a 3' CCACCA end + 3 diphosphate. Catalyzes the addition and repair of the essential 3'-terminal CCA sequence in tRNAs without using a nucleic acid template. Adds these three nucleotides in the order of C, C, and A to the tRNA nucleotide-73, using CTP and ATP as substrates and producing inorganic pyrophosphate. tRNA 3'-terminal CCA addition is required both for tRNA processing and repair. Also involved in tRNA surveillance by mediating tandem CCA addition to generate a CCACCA at the 3' terminus of unstable tRNAs. While stable tRNAs receive only 3'-terminal CCA, unstable tRNAs are marked with CCACCA and rapidly degraded. The polypeptide is Multifunctional CCA protein (Erwinia tasmaniensis (strain DSM 17950 / CFBP 7177 / CIP 109463 / NCPPB 4357 / Et1/99)).